Here is a 76-residue protein sequence, read N- to C-terminus: Large ribosomal subunit protein eL20 (76 aa).

The protein belongs to the eukaryotic ribosomal protein eL20 family. Part of the 50S ribosomal subunit. Binds 23S rRNA.

This Methanococcus maripaludis (strain DSM 14266 / JCM 13030 / NBRC 101832 / S2 / LL) protein is Large ribosomal subunit protein eL20.